The primary structure comprises 625 residues: ATP-dependent rRNA helicase spb4 (625 aa).

The Q motif motif lies at 14 to 42 (WDALTPSLAEWILDAIKSMGFEKMTPVQA). Residues 45–246 (IPLFMGNKDV…RVGLRNPVKI (202 aa)) form the Helicase ATP-binding domain. 58–65 (AVTGSGKT) is an ATP binding site. Residues 194–197 (DEAD) carry the DEAD box motif. One can recognise a Helicase C-terminal domain in the interval 278-436 (ALLSLLSQLQ…TTDDAAKILI (159 aa)). A disordered region spans residues 550–597 (KKQREAWSQKHEKQDLKELKREKKKRKREIERLDKMTDEEKRVEQEKE). 2 stretches are compositionally biased toward basic and acidic residues: residues 553 to 570 (REAWSQKHEKQDLKELKR) and 577 to 597 (REIERLDKMTDEEKRVEQEKE). Residues 557–614 (SQKHEKQDLKELKREKKKRKREIERLDKMTDEEKRVEQEKERELQALIEQVKRRKIED) adopt a coiled-coil conformation.

This sequence belongs to the DEAD box helicase family. DDX55/SPB4 subfamily. In terms of assembly, component of pre-60S ribosomal complexes.

It is found in the nucleus. Its subcellular location is the nucleolus. The catalysed reaction is ATP + H2O = ADP + phosphate + H(+). Its function is as follows. ATP-binding RNA helicase involved in the biogenesis of 60S ribosomal subunits. Binds 90S pre-ribosomal particles and dissociates from pre-60S ribosomal particles after processing of 27SB pre-rRNA. Required for the normal formation of 18S rRNA through the processing of pre-rRNAs at sites A0, A1 and A2, and the normal formation of 25S and 5.8S rRNAs through the processing of pre-rRNAs at sites C1 and C2. This chain is ATP-dependent rRNA helicase spb4, found in Sclerotinia sclerotiorum (strain ATCC 18683 / 1980 / Ss-1) (White mold).